Here is a 514-residue protein sequence, read N- to C-terminus: Ammonium transporter 1 member 2 (514 aa).

11 helical membrane passes run 56 to 76 (LLFS…LCAG), 91 to 111 (VLDA…FAFG), 140 to 160 (FFLY…GSIA), 165 to 185 (FVAY…TVSH), 212 to 232 (FAGS…GALV), 257 to 277 (VVLG…GSFL), 291 to 313 (GQWS…AALT), 328 to 348 (IDVC…CAVV), 351 to 371 (WAAI…NLLA), 380 to 400 (LEAA…TGLF), and 431 to 451 (IVQI…LFYG). Threonine 472 is modified (phosphothreonine).

The protein belongs to the ammonia transporter channel (TC 1.A.11.2) family. In terms of tissue distribution, high expression in root.

It localises to the membrane. Functionally, ammonium transporter probably involved in ammonium uptake from the soil. This chain is Ammonium transporter 1 member 2 (AMT1-2), found in Arabidopsis thaliana (Mouse-ear cress).